The primary structure comprises 357 residues: tRNA-specific 2-thiouridylase MnmA (357 aa).

Residues 7-14 and M33 each bind ATP; that span reads GMSGGVDS. C103 acts as the Nucleophile in catalysis. C103 and C200 are joined by a disulfide. G127 lines the ATP pocket. The interval 150-152 is interaction with tRNA; sequence KDQ. The Cysteine persulfide intermediate role is filled by C200. Residues 306–307 form an interaction with tRNA region; sequence RY.

It belongs to the MnmA/TRMU family.

The protein resides in the cytoplasm. It carries out the reaction S-sulfanyl-L-cysteinyl-[protein] + uridine(34) in tRNA + AH2 + ATP = 2-thiouridine(34) in tRNA + L-cysteinyl-[protein] + A + AMP + diphosphate + H(+). In terms of biological role, catalyzes the 2-thiolation of uridine at the wobble position (U34) of tRNA, leading to the formation of s(2)U34. This chain is tRNA-specific 2-thiouridylase MnmA, found in Lachnoclostridium phytofermentans (strain ATCC 700394 / DSM 18823 / ISDg) (Clostridium phytofermentans).